The following is a 764-amino-acid chain: 5-methyltetrahydropteroyltriglutamate--homocysteine methyltransferase (764 aa).

Residues 17–20 (RELK) and K117 contribute to the 5-methyltetrahydropteroyltri-L-glutamate site. Residues 436–438 (IGS) and E489 contribute to the L-homocysteine site. L-methionine-binding positions include 436–438 (IGS) and E489. Residues 520-521 (RC) and W566 contribute to the 5-methyltetrahydropteroyltri-L-glutamate site. D604 contributes to the L-homocysteine binding site. D604 is an L-methionine binding site. Position 610 (E610) interacts with 5-methyltetrahydropteroyltri-L-glutamate. Residues H646, C648, and E670 each coordinate Zn(2+). The active-site Proton donor is H699. C731 contributes to the Zn(2+) binding site.

Belongs to the vitamin-B12 independent methionine synthase family. Requires Zn(2+) as cofactor.

The catalysed reaction is 5-methyltetrahydropteroyltri-L-glutamate + L-homocysteine = tetrahydropteroyltri-L-glutamate + L-methionine. It functions in the pathway amino-acid biosynthesis; L-methionine biosynthesis via de novo pathway; L-methionine from L-homocysteine (MetE route): step 1/1. Its function is as follows. Catalyzes the transfer of a methyl group from 5-methyltetrahydrofolate to homocysteine resulting in methionine formation. This chain is 5-methyltetrahydropteroyltriglutamate--homocysteine methyltransferase, found in Baumannia cicadellinicola subsp. Homalodisca coagulata.